A 235-amino-acid chain; its full sequence is Small ribosomal subunit protein uS2 (235 aa).

Belongs to the universal ribosomal protein uS2 family.

The polypeptide is Small ribosomal subunit protein uS2 (Thermoanaerobacter sp. (strain X514)).